A 338-amino-acid polypeptide reads, in one-letter code: Fructose-1,6-bisphosphatase class 1 (338 aa).

4 residues coordinate Mg(2+): glutamate 92, aspartate 115, leucine 117, and aspartate 118. Substrate is bound by residues 118-121 (DGSS), asparagine 211, tyrosine 244, 262-264 (YLY), and lysine 274. Glutamate 280 contacts Mg(2+).

The protein belongs to the FBPase class 1 family. As to quaternary structure, homotetramer. Requires Mg(2+) as cofactor.

The protein localises to the cytoplasm. It carries out the reaction beta-D-fructose 1,6-bisphosphate + H2O = beta-D-fructose 6-phosphate + phosphate. It functions in the pathway carbohydrate biosynthesis; gluconeogenesis. This is Fructose-1,6-bisphosphatase class 1 from Vibrio parahaemolyticus serotype O3:K6 (strain RIMD 2210633).